The chain runs to 316 residues: 4-diphosphocytidyl-2-C-methyl-D-erythritol kinase (316 aa).

Residue lysine 14 is part of the active site. 96–106 (PMGAGLGGGSS) serves as a coordination point for ATP. Aspartate 138 is an active-site residue.

The protein belongs to the GHMP kinase family. IspE subfamily.

The enzyme catalyses 4-CDP-2-C-methyl-D-erythritol + ATP = 4-CDP-2-C-methyl-D-erythritol 2-phosphate + ADP + H(+). Its pathway is isoprenoid biosynthesis; isopentenyl diphosphate biosynthesis via DXP pathway; isopentenyl diphosphate from 1-deoxy-D-xylulose 5-phosphate: step 3/6. Catalyzes the phosphorylation of the position 2 hydroxy group of 4-diphosphocytidyl-2C-methyl-D-erythritol. This is 4-diphosphocytidyl-2-C-methyl-D-erythritol kinase from Solibacter usitatus (strain Ellin6076).